The sequence spans 551 residues: Interferon-induced, double-stranded RNA-activated protein kinase (551 aa).

A2 is modified (N-acetylalanine). A (Microbial infection) Interaction with HCV NS5A region spans residues 2 to 180; it reads AGDLSAGFFM…SVKSDYLSSG (179 aa). The DRBM 1 domain maps to 9 to 77; that stretch reads FFMEELNTYR…AKLAVEILNK (69 aa). K69 is covalently cross-linked (Glycyl lysine isopeptide (Lys-Gly) (interchain with G-Cter in ISG15)). S83 bears the Phosphoserine mark. T88, T89, and T90 each carry phosphothreonine; by autocatalysis. The region spanning 100-167 is the DRBM 2 domain; sequence NYIGLINRIA…AKLAYLQILS (68 aa). A Phosphotyrosine; by autocatalysis modification is found at Y101. A Glycyl lysine isopeptide (Lys-Gly) (interchain with G-Cter in ISG15) cross-link involves residue K159. A Phosphotyrosine; by autocatalysis modification is found at Y162. Residues 202–215 are compositionally biased toward polar residues; the sequence is SSSEGDFSADTSEI. Residues 202 to 222 form a disordered region; that stretch reads SSSEGDFSADTSEINSNSDSL. S242 carries the post-translational modification Phosphoserine; by autocatalysis. Phosphothreonine; by autocatalysis is present on residues T255 and T258. Positions 266 to 362 are dimerization; that stretch reads DFKEIELIGS…NSSRSKTKCL (97 aa). The interval 266-551 is interaction with TRAF5; it reads DFKEIELIGS…SPEKNERHTC (286 aa). The 272-residue stretch at 267–538 folds into the Protein kinase domain; that stretch reads FKEIELIGSG…TSEILRTLTV (272 aa). 273–281 lines the ATP pocket; the sequence is IGSGGFGQV. Y293 is subject to Phosphotyrosine; by autocatalysis. K296 contributes to the ATP binding site. Tandem repeats lie at residues 331 to 343 and 345 to 357. The segment at 331–357 is 2 X 13 AA approximate repeats; sequence DYDPETSDDSLESSDYDPENSKNSSRS. An interaction with EIF2S1/EIF-2ALPHA region spans residues 379–496; that stretch reads EKRRGEKLDK…TAFETSKFFT (118 aa). The active-site Proton acceptor is D414. D432 contributes to the Mg(2+) binding site. Phosphothreonine; by autocatalysis is present on residues T446 and T451. 2 positions are modified to phosphoserine: S456 and S542.

Belongs to the protein kinase superfamily. Ser/Thr protein kinase family. GCN2 subfamily. In terms of assembly, homodimer. Interacts with STRBP. Interacts with DNAJC3. Forms a complex with FANCA, FANCC, FANCG and HSP70. Interacts with ADAR/ADAR1. Interacts with IRS1. The inactive form interacts with NCK1 and GSN. Interacts (via the kinase catalytic domain) with STAT3 (via SH2 domain), TRAF2 (C-terminus), TRAF5 (C-terminus) and TRAF6 (C-terminus). Interacts with MAP2K6, IKBKB/IKKB, NPM1, TARBP2, NLRP1, NLRP3, NLRC4 and AIM2. Interacts (via DRBM 1 domain) with DUS2L (via DRBM domain). Interacts with DHX9 (via N-terminus) and this interaction is dependent upon activation of the kinase. Interacts with EIF2S1/EIF-2ALPHA; this interaction induces a conformational change in EIF2S1 and its phosphorylation by EIF2AK2. (Microbial infection) Interacts with human cytomegalovirus (HCMV) TRS1; this interaction retains EIF2AK2 to the nucleus and prevents its activation. As to quaternary structure, (Microbial infection) Interacts with vaccinia virus protein K3 (K3L); this interaction inhibits EIF2AK2. In terms of assembly, (Microbial infection) Interacts with human herpes simplex virus 1 (HHV-1) protein US11 in an RNA-dependent manner. (Microbial infection) The inactive form interacts with Toscana virus (TOS) NSS. As to quaternary structure, (Microbial infection) Interacts with herpes virus 8 protein v-IRF2; this interaction inhibits EIF2AK2 activation. In terms of assembly, (Microbial infection) Interacts with vaccinia protein E3. (Microbial infection) Interacts (via N-terminus) with Hepatitis C virus (HCV) mature core protein (via N-terminus); this interaction induces the autophosphorylation of EIF2AK2. As to quaternary structure, (Microbial infection) Interacts with Hepatitis C virus (HCV) non-structural protein 5A (NS5A); this interaction leads to disruption of EIF2AK2 dimerization by NS5A. In terms of assembly, (Microbial infection) Interacts with Hepatitis C virus (HCV) envelope glycoprotein E2; this interaction inhibits EIF2AK2 and blocks its inhibitory effect on protein synthesis and cell growth. (Microbial infection) Interacts with human respiratory syncytial virus (HRSV) nucleoprotein; this interaction inhibits EIF2AK2 phosphorylation of EIF2S1 and blocks EIF2AK2-mediated translation shutoff. As to quaternary structure, (Microbial infection) Interacts with human herpesvirus 8 protein MTA/ORF57; this interaction inhibits stress granule formation. Mg(2+) serves as cofactor. Post-translationally, autophosphorylated on several Ser, Thr and Tyr residues. Autophosphorylation of Thr-451 is dependent on Thr-446 and is stimulated by dsRNA binding and dimerization. Autophosphorylation apparently leads to the activation of the kinase. Tyrosine autophosphorylation is essential for efficient dsRNA-binding, dimerization, and kinase activation. Highly expressed in thymus, spleen and bone marrow compared to non-hematopoietic tissues such as small intestine, liver, or kidney tissues. Colocalizes with GSK3B and TAU in the Alzheimer disease (AD) brain. Elevated levels seen in breast and colon carcinomas, and which correlates with tumor progression and invasiveness or risk of progression.

It localises to the cytoplasm. It is found in the nucleus. Its subcellular location is the perinuclear region. It catalyses the reaction L-seryl-[protein] + ATP = O-phospho-L-seryl-[protein] + ADP + H(+). The enzyme catalyses L-threonyl-[protein] + ATP = O-phospho-L-threonyl-[protein] + ADP + H(+). The catalysed reaction is L-tyrosyl-[protein] + ATP = O-phospho-L-tyrosyl-[protein] + ADP + H(+). Its activity is regulated as follows. Initially produced in an inactive form and is activated by binding to viral dsRNA, which causes dimerization and autophosphorylation in the activation loop and stimulation of function. ISGylation can activate it in the absence of viral infection. Can also be activated by heparin, pro-inflammatory stimuli, growth factors, cytokines, oxidative stress and the cellular protein PRKRA. Activity is markedly stimulated by manganese ions. Activation is blocked by the viral components HIV-1 Tat protein and large amounts of HIV-1 trans-activation response (TAR) RNA element as well as by the cellular proteins TARBP2, DUS2L, NPM1, NCK1 and ADAR. Down-regulated by Toscana virus (TOS) and Rift valley fever virus (RVFV) NSS which promote its proteasomal degradation. Inhibited by vaccinia virus protein E3, probably via dsRNA sequestering. IFN-induced dsRNA-dependent serine/threonine-protein kinase that phosphorylates the alpha subunit of eukaryotic translation initiation factor 2 (EIF2S1/eIF-2-alpha) and plays a key role in the innate immune response to viral infection. Inhibits viral replication via the integrated stress response (ISR): EIF2S1/eIF-2-alpha phosphorylation in response to viral infection converts EIF2S1/eIF-2-alpha in a global protein synthesis inhibitor, resulting to a shutdown of cellular and viral protein synthesis, while concomitantly initiating the preferential translation of ISR-specific mRNAs, such as the transcriptional activator ATF4. Exerts its antiviral activity on a wide range of DNA and RNA viruses including hepatitis C virus (HCV), hepatitis B virus (HBV), measles virus (MV) and herpes simplex virus 1 (HHV-1). Also involved in the regulation of signal transduction, apoptosis, cell proliferation and differentiation: phosphorylates other substrates including p53/TP53, PPP2R5A, DHX9, ILF3, IRS1 and the HHV-1 viral protein US11. In addition to serine/threonine-protein kinase activity, also has tyrosine-protein kinase activity and phosphorylates CDK1 at 'Tyr-4' upon DNA damage, facilitating its ubiquitination and proteasomal degradation. Either as an adapter protein and/or via its kinase activity, can regulate various signaling pathways (p38 MAP kinase, NF-kappa-B and insulin signaling pathways) and transcription factors (JUN, STAT1, STAT3, IRF1, ATF3) involved in the expression of genes encoding pro-inflammatory cytokines and IFNs. Activates the NF-kappa-B pathway via interaction with IKBKB and TRAF family of proteins and activates the p38 MAP kinase pathway via interaction with MAP2K6. Can act as both a positive and negative regulator of the insulin signaling pathway (ISP). Negatively regulates ISP by inducing the inhibitory phosphorylation of insulin receptor substrate 1 (IRS1) at 'Ser-312' and positively regulates ISP via phosphorylation of PPP2R5A which activates FOXO1, which in turn up-regulates the expression of insulin receptor substrate 2 (IRS2). Can regulate NLRP3 inflammasome assembly and the activation of NLRP3, NLRP1, AIM2 and NLRC4 inflammasomes. Plays a role in the regulation of the cytoskeleton by binding to gelsolin (GSN), sequestering the protein in an inactive conformation away from actin. The chain is Interferon-induced, double-stranded RNA-activated protein kinase (EIF2AK2) from Homo sapiens (Human).